We begin with the raw amino-acid sequence, 471 residues long: Glutamate--tRNA ligase (471 aa).

Positions 9–19 (PSPTGYLHVGG) match the 'HIGH' region motif. Zn(2+) contacts are provided by Cys98, Cys100, Cys125, and Asp127. The short motif at 237–241 (KLSKR) is the 'KMSKS' region element. Lys240 is an ATP binding site.

This sequence belongs to the class-I aminoacyl-tRNA synthetase family. Glutamate--tRNA ligase type 1 subfamily. In terms of assembly, monomer. Requires Zn(2+) as cofactor.

It localises to the cytoplasm. It carries out the reaction tRNA(Glu) + L-glutamate + ATP = L-glutamyl-tRNA(Glu) + AMP + diphosphate. Its function is as follows. Catalyzes the attachment of glutamate to tRNA(Glu) in a two-step reaction: glutamate is first activated by ATP to form Glu-AMP and then transferred to the acceptor end of tRNA(Glu). The protein is Glutamate--tRNA ligase of Yersinia enterocolitica serotype O:8 / biotype 1B (strain NCTC 13174 / 8081).